Consider the following 152-residue polypeptide: MFRGASAINMDAKGRIAIPMRYRDQLHVHGTGVIVITIDIQSQCLLIYPLQEWELIEAKLLTLSDTNPVERSFKRRLLGHAHECELDSHGRVLVPPTLRQYAGLDKKAMLVGLLNKFELWDEAAWQQQMDDSQTLIQSQDLSSQDRLADFSL.

2 SpoVT-AbrB domains span residues 5–52 (ASAI…PLQE) and 81–124 (AHEC…DEAA).

Belongs to the MraZ family. Forms oligomers.

Its subcellular location is the cytoplasm. It localises to the nucleoid. This chain is Transcriptional regulator MraZ, found in Shewanella denitrificans (strain OS217 / ATCC BAA-1090 / DSM 15013).